Reading from the N-terminus, the 555-residue chain is Branched-chain-amino-acid aminotransferase-like protein 1 (555 aa).

It belongs to the class-IV pyridoxal-phosphate-dependent aminotransferase family.

This Arabidopsis thaliana (Mouse-ear cress) protein is Branched-chain-amino-acid aminotransferase-like protein 1.